The chain runs to 328 residues: Ketol-acid reductoisomerase (NADP(+)) (328 aa).

The 181-residue stretch at 1–181 (MKIYYENDID…GLARAGVLET (181 aa)) folds into the KARI N-terminal Rossmann domain. Residues 24–27 (YGSQ), R47, S52, and 82–85 (DEIQ) contribute to the NADP(+) site. The active site involves H107. NADP(+) is bound at residue G133. Positions 182–327 (TFREETETDL…SKLRKLCGLE (146 aa)) constitute a KARI C-terminal knotted domain. Residues D190, E194, E226, and E230 each contribute to the Mg(2+) site. S251 contributes to the substrate binding site.

The protein belongs to the ketol-acid reductoisomerase family. Mg(2+) is required as a cofactor.

The catalysed reaction is (2R)-2,3-dihydroxy-3-methylbutanoate + NADP(+) = (2S)-2-acetolactate + NADPH + H(+). It catalyses the reaction (2R,3R)-2,3-dihydroxy-3-methylpentanoate + NADP(+) = (S)-2-ethyl-2-hydroxy-3-oxobutanoate + NADPH + H(+). The protein operates within amino-acid biosynthesis; L-isoleucine biosynthesis; L-isoleucine from 2-oxobutanoate: step 2/4. Its pathway is amino-acid biosynthesis; L-valine biosynthesis; L-valine from pyruvate: step 2/4. Involved in the biosynthesis of branched-chain amino acids (BCAA). Catalyzes an alkyl-migration followed by a ketol-acid reduction of (S)-2-acetolactate (S2AL) to yield (R)-2,3-dihydroxy-isovalerate. In the isomerase reaction, S2AL is rearranged via a Mg-dependent methyl migration to produce 3-hydroxy-3-methyl-2-ketobutyrate (HMKB). In the reductase reaction, this 2-ketoacid undergoes a metal-dependent reduction by NADPH to yield (R)-2,3-dihydroxy-isovalerate. This chain is Ketol-acid reductoisomerase (NADP(+)), found in Methanothermobacter thermautotrophicus (strain ATCC 29096 / DSM 1053 / JCM 10044 / NBRC 100330 / Delta H) (Methanobacterium thermoautotrophicum).